The following is a 211-amino-acid chain: Large ribosomal subunit protein uL3 (211 aa).

Gln150 bears the N5-methylglutamine mark.

This sequence belongs to the universal ribosomal protein uL3 family. Part of the 50S ribosomal subunit. Forms a cluster with proteins L14 and L19. Post-translationally, methylated by PrmB.

One of the primary rRNA binding proteins, it binds directly near the 3'-end of the 23S rRNA, where it nucleates assembly of the 50S subunit. This chain is Large ribosomal subunit protein uL3, found in Pseudomonas aeruginosa (strain LESB58).